A 197-amino-acid polypeptide reads, in one-letter code: 3-isopropylmalate dehydratase small subunit (197 aa).

This sequence belongs to the LeuD family. LeuD type 1 subfamily. In terms of assembly, heterodimer of LeuC and LeuD.

The catalysed reaction is (2R,3S)-3-isopropylmalate = (2S)-2-isopropylmalate. It functions in the pathway amino-acid biosynthesis; L-leucine biosynthesis; L-leucine from 3-methyl-2-oxobutanoate: step 2/4. Functionally, catalyzes the isomerization between 2-isopropylmalate and 3-isopropylmalate, via the formation of 2-isopropylmaleate. The protein is 3-isopropylmalate dehydratase small subunit (leuD) of Streptomyces coelicolor (strain ATCC BAA-471 / A3(2) / M145).